A 171-amino-acid polypeptide reads, in one-letter code: Galectin-related protein A (171 aa).

Residues 38–170 enclose the Galectin domain; that stretch reads PFCGHIKGGL…INGDLQLTKL (133 aa).

In terms of biological role, does not bind lactose, and may not bind carbohydrates. The protein is Galectin-related protein A (lgalsl-a) of Xenopus laevis (African clawed frog).